The sequence spans 694 residues: Elongation factor G (694 aa).

Residues 9-288 form the tr-type G domain; sequence DAIRNIGIMA…VIVKWLPSPL (280 aa). Residues 18-25, 82-86, and 136-139 contribute to the GTP site; these read AHIDAGKT, DTPGH, and NKMD.

The protein belongs to the TRAFAC class translation factor GTPase superfamily. Classic translation factor GTPase family. EF-G/EF-2 subfamily.

Its subcellular location is the cytoplasm. Its function is as follows. Catalyzes the GTP-dependent ribosomal translocation step during translation elongation. During this step, the ribosome changes from the pre-translocational (PRE) to the post-translocational (POST) state as the newly formed A-site-bound peptidyl-tRNA and P-site-bound deacylated tRNA move to the P and E sites, respectively. Catalyzes the coordinated movement of the two tRNA molecules, the mRNA and conformational changes in the ribosome. The protein is Elongation factor G of Chlamydia trachomatis serovar L2 (strain ATCC VR-902B / DSM 19102 / 434/Bu).